Consider the following 340-residue polypeptide: Phenylalanine--tRNA ligase alpha subunit (340 aa).

A Mg(2+)-binding site is contributed by glutamate 254.

The protein belongs to the class-II aminoacyl-tRNA synthetase family. Phe-tRNA synthetase alpha subunit type 1 subfamily. In terms of assembly, tetramer of two alpha and two beta subunits. Mg(2+) serves as cofactor.

The protein resides in the cytoplasm. The enzyme catalyses tRNA(Phe) + L-phenylalanine + ATP = L-phenylalanyl-tRNA(Phe) + AMP + diphosphate + H(+). This chain is Phenylalanine--tRNA ligase alpha subunit, found in Caldicellulosiruptor saccharolyticus (strain ATCC 43494 / DSM 8903 / Tp8T 6331).